We begin with the raw amino-acid sequence, 199 residues long: MPSTFSQPSPSNALVNDRRDVFPLSPLIKITLVNLYLALTVPLPILAQLTQGNALLTLLLTVGLMGGLVALVAALAEQVVLNGEGIAVRYPRWVPKFFRSGWQLSWADVTALKCRTTGQGGLVYYFLTESKDRAYLLPMRVAGFNRLTQLVSDHTGIDTQDVRPLSQPWMYLLLLLFTFLLWGSQLAIVLLLWSSPPLA.

Transmembrane regions (helical) follow at residues 27 to 47 (LIKI…PILA), 55 to 75 (LLTL…VAAL), and 172 to 192 (LLLL…VLLL).

The protein localises to the cell membrane. This is an uncharacterized protein from Synechocystis sp. (strain ATCC 27184 / PCC 6803 / Kazusa).